The sequence spans 259 residues: Ribosomal RNA small subunit methyltransferase A (259 aa).

The S-adenosyl-L-methionine site is built by asparagine 13, leucine 15, glycine 39, glutamate 60, aspartate 84, and asparagine 101.

It belongs to the class I-like SAM-binding methyltransferase superfamily. rRNA adenine N(6)-methyltransferase family. RsmA subfamily.

Its subcellular location is the cytoplasm. The enzyme catalyses adenosine(1518)/adenosine(1519) in 16S rRNA + 4 S-adenosyl-L-methionine = N(6)-dimethyladenosine(1518)/N(6)-dimethyladenosine(1519) in 16S rRNA + 4 S-adenosyl-L-homocysteine + 4 H(+). Specifically dimethylates two adjacent adenosines (A1518 and A1519) in the loop of a conserved hairpin near the 3'-end of 16S rRNA in the 30S particle. May play a critical role in biogenesis of 30S subunits. The chain is Ribosomal RNA small subunit methyltransferase A from Mesomycoplasma hyopneumoniae (strain 232) (Mycoplasma hyopneumoniae).